The chain runs to 254 residues: Type III pantothenate kinase (254 aa).

13–20 is a binding site for ATP; it reads MIGNTRQH. Substrate is bound by residues tyrosine 84 and 88 to 91; that span reads GLDR. The active-site Proton acceptor is the aspartate 90. A K(+)-binding site is contributed by aspartate 110. Threonine 113 is a binding site for ATP. Threonine 166 is a binding site for substrate.

It belongs to the type III pantothenate kinase family. Homodimer. Requires NH4(+) as cofactor. K(+) is required as a cofactor.

The protein localises to the cytoplasm. It catalyses the reaction (R)-pantothenate + ATP = (R)-4'-phosphopantothenate + ADP + H(+). It participates in cofactor biosynthesis; coenzyme A biosynthesis; CoA from (R)-pantothenate: step 1/5. Its function is as follows. Catalyzes the phosphorylation of pantothenate (Pan), the first step in CoA biosynthesis. The protein is Type III pantothenate kinase of Thermosynechococcus vestitus (strain NIES-2133 / IAM M-273 / BP-1).